Here is a 221-residue protein sequence, read N- to C-terminus: MARRPARCYRYCKNKPYPKSRYNRAVPDSKIRIFDLGRKRAGVDEFPLCIHLVSNEYEQITSEALEAARICANKYLVKIGGKDSFHLRVRAHPFHVVRINKMLSCAGADRLQTGMRHAFGKPNGLVARVNIGQILMSVRTKDSSRATAIEALRRCQYKFPGQQRIIVSKKWGFSQYARDEYIEKRSRGEIIPDGCYAKFLNKRGSLQEKLDLFPEASFNLA.

The protein belongs to the universal ribosomal protein uL16 family. As to quaternary structure, component of the large ribosomal subunit (LSU). Mature yeast ribosomes consist of a small (40S) and a large (60S) subunit. The 40S small subunit contains 1 molecule of ribosomal RNA (18S rRNA) and at least 33 different proteins. The large 60S subunit contains 3 rRNA molecules (25S, 5.8S and 5S rRNA) and at least 46 different proteins.

It is found in the cytoplasm. Its function is as follows. Component of the ribosome, a large ribonucleoprotein complex responsible for the synthesis of proteins in the cell. The small ribosomal subunit (SSU) binds messenger RNAs (mRNAs) and translates the encoded message by selecting cognate aminoacyl-transfer RNA (tRNA) molecules. The large subunit (LSU) contains the ribosomal catalytic site termed the peptidyl transferase center (PTC), which catalyzes the formation of peptide bonds, thereby polymerizing the amino acids delivered by tRNAs into a polypeptide chain. The nascent polypeptides leave the ribosome through a tunnel in the LSU and interact with protein factors that function in enzymatic processing, targeting, and the membrane insertion of nascent chains at the exit of the ribosomal tunnel. The sequence is that of Large ribosomal subunit protein uL16A (rpl1001) from Schizosaccharomyces pombe (strain 972 / ATCC 24843) (Fission yeast).